A 1146-amino-acid chain; its full sequence is Elicitor of plant defense protein 1 (1146 aa).

Disordered regions lie at residues 25-75 and 156-226; these read DPLP…RLSN and ARPP…PRQG. Positions 164-177 are enriched in basic and acidic residues; the sequence is RAERIKAEDSDQSG. Residues 246–500 enclose the uDENN domain; the sequence is PLNTDPNMHP…NLCTEAFSPL (255 aa). A cDENN domain is found at 522 to 656; that stretch reads VNEIPGSRTI…HRRKLHALLQ (135 aa). In terms of domain architecture, dDENN spans 658 to 1016; the sequence is AAPAKLRYGV…ERETKPGTTA (359 aa). A disordered region spans residues 730 to 806; sequence LHSKVDPNKP…RRSSSFGVDK (77 aa). A compositionally biased stretch (basic and acidic residues) spans 732 to 743; sequence SKVDPNKPDRPG. Residues 744–760 show a composition bias toward low complexity; it reads TSKSTRTSPPSSVSPVS. The segment covering 769 to 783 has biased composition (polar residues); it reads TPVSRSDSGFALTST. Basic and acidic residues predominate over residues 784–797; sequence LREKRSRNFDEKTR. The segment at 883–931 adopts a Phorbol-ester/DAG-type zinc-finger fold; it reads GHCFNWEEGALSSSCSVCDDRAEGDGIYKCSGCSAFAHGRCLGCVSLAC. The interval 1121-1146 is disordered; that stretch reads PRPEQRGTRGLVRKQVPSMLGTSPTN.

Belongs to the EPD1 elicitor family. As to quaternary structure, interacts with host cotton EIR5A (AC A0A5J5T2N2) and EIR5D (AC A0A5J5NT52) and host N.benthamiana EIR (AC P0DXJ0).

The protein localises to the secreted. It localises to the host cell. Functionally, acts as an elicitor that triggers defense responses in both Nicotiana benthamiana and cotton plants. Triggers the accumulation of reactive oxygen species (ROS) and the activation of cell death in cotton plants. Induces significantly enhanced resistance of Nicotiana benthamiana to both the broad-host-range filamentous pathogen Botrytis cinerea and the semibiotrophic pathogen Phytophthora capsici. Stimulates the expression of EIR5A (AC A0A5J5T2N2) and EIR5D (AC A0A5J5NT52) in cotton plants and recognition of EPD1 potentiates EIRs to enhance cotton PAMP-triggered immunity (PTI). The sequence is that of Elicitor of plant defense protein 1 from Verticillium dahliae (strain VdLs.17 / ATCC MYA-4575 / FGSC 10137) (Verticillium wilt).